An 83-amino-acid polypeptide reads, in one-letter code: Large ribosomal subunit protein bL27c (83 aa).

Residues 1 to 21 (MAHKKGAGSTKNGRDSNAKRL) are disordered.

It belongs to the bacterial ribosomal protein bL27 family.

It is found in the plastid. It localises to the chloroplast. The polypeptide is Large ribosomal subunit protein bL27c (Phaeodactylum tricornutum (strain CCAP 1055/1)).